The following is a 75-amino-acid chain: Large ribosomal subunit protein uL29 (75 aa).

It belongs to the universal ribosomal protein uL29 family.

In Pyrobaculum aerophilum (strain ATCC 51768 / DSM 7523 / JCM 9630 / CIP 104966 / NBRC 100827 / IM2), this protein is Large ribosomal subunit protein uL29.